A 413-amino-acid chain; its full sequence is Tyrosine--tRNA ligase (413 aa).

Residues 60 to 69 (PTAPDIHIGH) carry the 'HIGH' region motif. Residues 244 to 248 (KMSKS) carry the 'KMSKS' region motif. Lys247 contributes to the ATP binding site. The region spanning 352–412 (LGIAQLLKQA…GKRRFARVTL (61 aa)) is the S4 RNA-binding domain.

Belongs to the class-I aminoacyl-tRNA synthetase family. TyrS type 2 subfamily. Homodimer.

Its subcellular location is the cytoplasm. It carries out the reaction tRNA(Tyr) + L-tyrosine + ATP = L-tyrosyl-tRNA(Tyr) + AMP + diphosphate + H(+). Its function is as follows. Catalyzes the attachment of tyrosine to tRNA(Tyr) in a two-step reaction: tyrosine is first activated by ATP to form Tyr-AMP and then transferred to the acceptor end of tRNA(Tyr). The polypeptide is Tyrosine--tRNA ligase (Cupriavidus pinatubonensis (strain JMP 134 / LMG 1197) (Cupriavidus necator (strain JMP 134))).